The chain runs to 444 residues: Tol-Pal system protein TolB (444 aa).

The signal sequence occupies residues 1–31; the sequence is MSFDLNRRQLMISAATAAGALALGPARDAFG.

It belongs to the TolB family. In terms of assembly, the Tol-Pal system is composed of five core proteins: the inner membrane proteins TolA, TolQ and TolR, the periplasmic protein TolB and the outer membrane protein Pal. They form a network linking the inner and outer membranes and the peptidoglycan layer.

It is found in the periplasm. Part of the Tol-Pal system, which plays a role in outer membrane invagination during cell division and is important for maintaining outer membrane integrity. This is Tol-Pal system protein TolB from Rhodopseudomonas palustris (strain ATCC BAA-98 / CGA009).